A 109-amino-acid polypeptide reads, in one-letter code: Protein ripply2 (109 aa).

The span at 1–15 (MENITFTSGLNSEMD) shows a compositional bias: polar residues. 2 disordered regions span residues 1 to 42 (MENI…RPAD) and 88 to 109 (YEDPDTEDEEDYSDEEDEKELR). The WRPW motif motif lies at 20-23 (WRPW). The segment covering 30–42 (KAPDYKPYKRPAD) has biased composition (basic and acidic residues). The interval 53–88 (HPVKLFWPKSQCFDYLYEDAEVLLRNYPVQATICLY) is ripply homology domain. Over residues 89–109 (EDPDTEDEEDYSDEEDEKELR) the composition is skewed to acidic residues.

This sequence belongs to the ripply family. In terms of tissue distribution, first expressed in the paraxial mesoderm at the 90% epiboly stage, and subsequently confined to the presomitic mesoderm. Expressed in the rostral compartment of S-I and S-II.

It localises to the nucleus. Its function is as follows. Plays a role in somitogenesis. Required for somite segregation and establishment of rostrocaudal polarity in somites. The polypeptide is Protein ripply2 (Danio rerio (Zebrafish)).